A 342-amino-acid polypeptide reads, in one-letter code: L-threonine 3-dehydrogenase (342 aa).

Position 39 (Cys39) interacts with Zn(2+). Active-site charge relay system residues include Thr41 and His44. The Zn(2+) site is built by His64, Glu65, Cys94, Cys97, Cys100, and Cys108. Residues Ile176, Asp196, Arg201, Leu263–Ile265, and Ile287–Tyr288 each bind NAD(+).

This sequence belongs to the zinc-containing alcohol dehydrogenase family. Homotetramer. The cofactor is Zn(2+).

Its subcellular location is the cytoplasm. The enzyme catalyses L-threonine + NAD(+) = (2S)-2-amino-3-oxobutanoate + NADH + H(+). It functions in the pathway amino-acid degradation; L-threonine degradation via oxydo-reductase pathway; glycine from L-threonine: step 1/2. Its function is as follows. Catalyzes the NAD(+)-dependent oxidation of L-threonine to 2-amino-3-ketobutyrate. This chain is L-threonine 3-dehydrogenase, found in Protochlamydia amoebophila (strain UWE25).